We begin with the raw amino-acid sequence, 954 residues long: Serine/threonine-protein kinase ste20 (954 aa).

Residues 1–17 (MDGQLSLLSPTSSSSTS) show a composition bias toward low complexity. 2 disordered regions span residues 1-165 (MDGQ…YDPL) and 203-316 (AAPA…RKKS). Positions 18–28 (HSRKRLTKKQR) are enriched in basic residues. 3 stretches are compositionally biased toward polar residues: residues 33–42 (NHRTSSSFNV), 57–75 (SASS…SLAR), and 100–121 (RSHT…TIPT). 3 stretches are compositionally biased toward low complexity: residues 127 to 136 (SPASSSQPQT), 143 to 153 (SAVASTTVTSS), and 203 to 214 (AAPAPTSTTTIA). Positions 224–234 (VAPPPPPPPPA) are enriched in pro residues. Low complexity-rich tracts occupy residues 245–256 (ARSSKPSKSPKS) and 265–277 (ASSF…FSSA). A CRIB domain is found at 334–347 (ISAPENPVHVTHVG). 2 disordered regions span residues 440 to 562 (PMIS…VQAS) and 587 to 655 (QAMA…SNAI). 2 stretches are compositionally biased toward pro residues: residues 463–475 (RAPP…PGPL) and 514–527 (MPPP…PYLP). One can recognise a Protein kinase domain in the interval 674 to 925 (YRGFTKIGQG…AHDLLRHDFM (252 aa)). ATP contacts are provided by residues 680 to 688 (IGQGASGGV) and lysine 703. The active-site Proton acceptor is the aspartate 793.

It belongs to the protein kinase superfamily. STE Ser/Thr protein kinase family. STE20 subfamily.

It localises to the cytoplasm. Its subcellular location is the nucleus. It catalyses the reaction L-seryl-[protein] + ATP = O-phospho-L-seryl-[protein] + ADP + H(+). The enzyme catalyses L-threonyl-[protein] + ATP = O-phospho-L-threonyl-[protein] + ADP + H(+). Functionally, MAP4K component of the MAPK pathway required for the mating pheromone response and the regulation of cell polarity and cell cycle. Phosphorylates histone H2B to form H2BS10ph. This Neurospora crassa (strain ATCC 24698 / 74-OR23-1A / CBS 708.71 / DSM 1257 / FGSC 987) protein is Serine/threonine-protein kinase ste20 (stk-4).